A 214-amino-acid polypeptide reads, in one-letter code: Ribonuclease S-2 (214 aa).

The first 22 residues, 1–22 (MSKSQLTSVFFILLCALSPIYG), serve as a signal peptide directing secretion. Cysteine 38 and cysteine 43 are oxidised to a cystine. The N-linked (GlcNAc...) asparagine glycan is linked to asparagine 49. The Proton donor role is filled by histidine 53. Histidine 53 provides a ligand contact to RNA. Asparagine 59 carries N-linked (GlcNAc...) asparagine glycosylation. Cysteine 67 and cysteine 116 are oxidised to a cystine. RNA contacts are provided by residues 91 to 92 (DL), lysine 94, and phenylalanine 105. The active site involves glutamate 109. Residue 112-113 (KH) participates in RNA binding. Catalysis depends on histidine 113, which acts as the Proton acceptor. Asparagine 160 is a glycosylation site (N-linked (GlcNAc...) asparagine). Intrachain disulfides connect cysteine 175-cysteine 204 and cysteine 187-cysteine 198.

This sequence belongs to the RNase T2 family.

The protein localises to the secreted. It is found in the extracellular space. It catalyses the reaction a ribonucleotidyl-ribonucleotide-RNA + H2O = a 3'-end 3'-phospho-ribonucleotide-RNA + a 5'-end dephospho-ribonucleoside-RNA + H(+). In terms of biological role, self-incompatibility (SI) is the inherited ability of a flowering plant to prevent self-fertilization by discriminating between self and non-self pollen during pollination. In many species of the Solanaceae, self-incompatibility is controlled by the single, multiallelic locus S. This stylar glycoprotein is associated with expression of self-incompatibility in potato. The sequence is that of Ribonuclease S-2 (S-2) from Nicotiana alata (Winged tobacco).